We begin with the raw amino-acid sequence, 450 residues long: Enolase (450 aa).

Q167 is a (2R)-2-phosphoglycerate binding site. Residue E209 is the Proton donor of the active site. Mg(2+)-binding residues include D250, E307, and D334. (2R)-2-phosphoglycerate is bound by residues K359, R388, S389, and K410. The active-site Proton acceptor is the K359.

The protein belongs to the enolase family. The cofactor is Mg(2+).

The protein resides in the cytoplasm. It localises to the secreted. Its subcellular location is the cell surface. It catalyses the reaction (2R)-2-phosphoglycerate = phosphoenolpyruvate + H2O. The protein operates within carbohydrate degradation; glycolysis; pyruvate from D-glyceraldehyde 3-phosphate: step 4/5. Its function is as follows. Catalyzes the reversible conversion of 2-phosphoglycerate (2-PG) into phosphoenolpyruvate (PEP). It is essential for the degradation of carbohydrates via glycolysis. 'Moonlights' as a plasminogen receptor and plasmin activator. Contributes to host (pig) cell adhesion; anti-enolase antibodies decrease binding to porcine kidney cells about 60%. Binds host plasminogen and fibronectin in vitro; enhances the activity of host tissue-specific plasminogen activator (tPA), and helps plasminogen and tPA degrade articifial host extracellular matrices. In Mesomycoplasma hyorhinis (strain HUB-1) (Mycoplasma hyorhinis), this protein is Enolase.